The following is a 1588-amino-acid chain: Paternally-expressed gene 3 protein (1588 aa).

In terms of domain architecture, SCAN box spans 46 to 128 (HQRFRNLIYV…TLLENYKEMY (83 aa)). 3 disordered regions span residues 128–231 (YQPE…YQNV), 265–304 (GHSH…RRGI), and 317–347 (KFIK…MSDD). Residues 129–142 (QPEDDNNSDVTSDD) show a composition bias toward acidic residues. 4 stretches are compositionally biased toward basic and acidic residues: residues 143 to 152 (DMTRNRRESS), 160 to 181 (FSDR…DRWS), 205 to 224 (FEMD…RSQD), and 293 to 304 (PEAKKSTHRRGI). 3 C2H2-type zinc fingers span residues 452-474 (YVCD…QIMH), 505-527 (FECK…RKIH), and 563-585 (YECR…QKIH). The span at 588–607 (DDKDNEREHERERERERGET) shows a compositional bias: basic and acidic residues. The interval 588 to 608 (DDKDNEREHERERERERGETF) is disordered. Residues 627 to 649 (YECKVCGETFLHSSSLKEHQKIH) form a C2H2-type 4 zinc finger. Disordered stretches follow at residues 839-889 (VASK…SKNR) and 905-929 (QKSV…SSNV). The span at 868-881 (LNDKRQKIPARENP) shows a compositional bias: basic and acidic residues. The C2H2-type 5 zinc-finger motif lies at 969-991 (YECQECGECFAHSSDLTEHQKIH). Positions 1056–1104 (EKSHGEESQGENTDGEETHSEETHGQETIEDPVIQGSDMEDPQKDDPDD) are disordered. Residues 1071-1082 (EETHSEETHGQE) are compositionally biased toward basic and acidic residues. C2H2-type zinc fingers lie at residues 1107 to 1129 (YECE…QKVH), 1163 to 1185 (YECP…QRIH), 1225 to 1247 (IRCL…MRLH), 1282 to 1304 (FECA…VTVH), and 1332 to 1354 (YECK…KELH). Positions 1396–1415 (EPEVEAAEPEVEAAEPEVEA) are enriched in acidic residues. Residues 1396–1495 (EPEVEAAEPE…GIEDPEEGED (100 aa)) are disordered. 7 repeat units span residues 1397–1403 (PEVEAAE), 1404–1410 (PEVEAAE), 1411–1417 (PEVEAAE), 1418–1422 (PNGEA), 1425–1429 (PDGEA), 1432–1436 (PIGEA), and 1439–1443 (PNGEA). Positions 1397 to 1417 (PEVEAAEPEVEAAEPEVEAAE) are 3 X 7 AA repeat of P-E-V-E-A-A-E. The tract at residues 1418 to 1443 (PNGEAEGPDGEAAEPIGEAGQPNGEA) is 4 X 5 AA repeat of P-X-G-E-A. 2 stretches are compositionally biased toward acidic residues: residues 1449-1466 (DADE…ERAE) and 1475-1495 (PEGD…EGED). 2 C2H2-type zinc fingers span residues 1505–1527 (YDCH…LKTH) and 1564–1586 (FKCD…QNTH).

It belongs to the krueppel C2H2-type zinc-finger protein family. As to quaternary structure, homodimer. Interacts with SIAH1A and SIAH2. Interacts with TRAF2. Brain, glial cells, astrocytes, embryo, placenta, testis, ovary and uterus. In the placenta it is found in the layer of villous cytotrophoblast cells while in the ovary it is found in the cells of the ovarian stroma including the thecal layers around the follicles. Expression is highly repressed in glioma cell lines.

The protein resides in the nucleus. Its subcellular location is the cytoplasm. Its function is as follows. Induces apoptosis in cooperation with SIAH1A. Acts as a mediator between p53/TP53 and BAX in a neuronal death pathway that is activated by DNA damage. Acts synergistically with TRAF2 and inhibits TNF induced apoptosis through activation of NF-kappa-B. Possesses a tumor suppressing activity in glioma cells. The polypeptide is Paternally-expressed gene 3 protein (PEG3) (Homo sapiens (Human)).